The sequence spans 129 residues: Large ribosomal subunit protein uL22 (129 aa).

Belongs to the universal ribosomal protein uL22 family. Part of the 50S ribosomal subunit.

In terms of biological role, this protein binds specifically to 23S rRNA; its binding is stimulated by other ribosomal proteins, e.g. L4, L17, and L20. It is important during the early stages of 50S assembly. It makes multiple contacts with different domains of the 23S rRNA in the assembled 50S subunit and ribosome. Its function is as follows. The globular domain of the protein is located near the polypeptide exit tunnel on the outside of the subunit, while an extended beta-hairpin is found that lines the wall of the exit tunnel in the center of the 70S ribosome. This Brucella suis biovar 1 (strain 1330) protein is Large ribosomal subunit protein uL22.